A 56-amino-acid polypeptide reads, in one-letter code: Mitoregulin (56 aa).

Topologically, residues 2–9 are mitochondrial matrix; sequence ADVSERTL. Residues 10-27 form a helical membrane-spanning segment; the sequence is QVSVLVAFASGVVLGWQA. Residues 28 to 56 lie on the Mitochondrial intermembrane side of the membrane; that stretch reads NRLRRRYLDWRKRRLQDKLATTQKKLDLA.

It belongs to the mitoregulin family. Interacts with mitochondrial trifunctional enzyme, a heterotetrameric complex composed of 2 HADHA subunits and 2 HADHB subunits. Interacts with cytochrome b5 reductase CYB5R3; the interaction is required to maintain cellular lipid composition and leads to stimulation of mitochondrial respiratory complex I activity. Interacts with ATP synthase subunit ATP5F1B/ATP5B. Enriched in heart and skeletal muscle (at protein level). Also enriched in adipose tissue with lower levels detected in liver, pancreas and brain (at protein level). Higher levels in differentiated myotubes than in satellite cells.

It is found in the mitochondrion inner membrane. Positively regulates mitochondrial complex assembly and/or stability. Increases mitochondrial membrane potential while decreasing mitochondrial reactive oxygen species. Increases mitochondrial respiration rate. Increased mitochondrial respiratory activity promotes myogenic differentiation which facilitates muscle growth and regeneration. Increases mitochondrial calcium retention capacity. Plays a role in maintenance of cellular lipid composition through its interaction with cytochrome b5 reductase CYB5R3 which is required for mitochondrial respiratory complex I activity. Interacts with the mitochondrial trifunctional enzyme complex (MTE) and enhances fatty acid beta-oxidation. Not required for MTE formation or stability. Modulates triglyceride clearance in adipocytes through its role in regulating fatty acid beta-oxidation and lipolysis. This Mus musculus (Mouse) protein is Mitoregulin.